Reading from the N-terminus, the 80-residue chain is uncharacterized protein (80 aa).

A disordered region spans residues Gly-57–Ile-80.

This is an uncharacterized protein from Bacillus subtilis (strain 168).